Reading from the N-terminus, the 563-residue chain is Coiled-coil domain-containing protein 63 (563 aa).

The disordered stretch occupies residues 1–29; sequence MSVLKKNRRKDSDTPQEPSEKAKEQQAEA. Residues 10-29 are compositionally biased toward basic and acidic residues; the sequence is KDSDTPQEPSEKAKEQQAEA. Coiled coils occupy residues 18–201, 233–291, and 341–422; these read PSEK…QLQH, AMKD…AKKH, and TELN…KKIN.

Functionally, plays a role in spermiogenesis. Involved in the elongation of flagella and the formation of sperm heads. The sequence is that of Coiled-coil domain-containing protein 63 from Homo sapiens (Human).